The following is a 277-amino-acid chain: Sulfur carrier protein FdhD (277 aa).

Cys-123 serves as the catalytic Cysteine persulfide intermediate. Residue 263-268 (FVRGNK) participates in Mo-bis(molybdopterin guanine dinucleotide) binding.

The protein belongs to the FdhD family.

It localises to the cytoplasm. Functionally, required for formate dehydrogenase (FDH) activity. Acts as a sulfur carrier protein that transfers sulfur from IscS to the molybdenum cofactor prior to its insertion into FDH. The chain is Sulfur carrier protein FdhD from Corynebacterium efficiens (strain DSM 44549 / YS-314 / AJ 12310 / JCM 11189 / NBRC 100395).